A 120-amino-acid chain; its full sequence is Crustacean hyperglycemic hormones 2 (120 aa).

The first 27 residues, 1 to 27 (MIAFHMVWSALLASLLLLLLAPSASPV), serve as a signal peptide directing secretion. 3 disulfides stabilise this stretch: Cys53/Cys89, Cys69/Cys85, and Cys72/Cys98. Residue Val118 is modified to Valine amide.

The protein belongs to the arthropod CHH/MIH/GIH/VIH hormone family.

It is found in the secreted. In terms of biological role, hormone found in the sinus gland of isopods and decapods which controls the blood sugar level. Has a secretagogue action over the amylase released from the midgut gland. May act as a stress hormone and may be involved in the control of molting and reproduction. The protein is Crustacean hyperglycemic hormones 2 of Penaeus japonicus (Kuruma prawn).